We begin with the raw amino-acid sequence, 402 residues long: MMKRLHPLRIQVHLKSDYPLFTFEQLLSTNGIRRGQTARISLKDYIEWQNFPNIMKRENFFTQRKPVTTTAKEEPFSFDNILDCEPQFSKCLAKWLLVNYKLNDYPYYDLNIVNIYTDLPQAIQICKNLMSYLKSTLSDNMFQKIKYFMVPLYKCDKIPSKLLDGIPGSVSLVQDYPVSPYFLQKKFHIEDPIQILMLNDVIKYTTHDLVRYSSDDKGWQQCFVDINKNGQKSKSFDSAIDYSCELALEQMFNDRSHVSPGKELYIPTKLIEILMTIKNNIPEHRLFIVDTPQRSSPTIISLLKSLISPRPTGSSQIVQPYSDSIFSDKRSGRICFMTDFLQLQNIYNGINSSSSSCEVEDVADFVEKWISPSERSTLSSQNGNRPQLEDIKNSSLAVLHST.

Belongs to the NDUFAF7 family.

The protein localises to the mitochondrion. It carries out the reaction L-arginyl-[protein] + 2 S-adenosyl-L-methionine = N(omega),N(omega)'-dimethyl-L-arginyl-[protein] + 2 S-adenosyl-L-homocysteine + 2 H(+). Arginine methyltransferase involved in the assembly or stability of mitochondrial NADH:ubiquinone oxidoreductase complex (complex I). In Saccharomyces cerevisiae (strain ATCC 204508 / S288c) (Baker's yeast), this protein is Protein arginine methyltransferase NDUFAF7 homolog, mitochondrial.